We begin with the raw amino-acid sequence, 315 residues long: MADFTEQTLRQKLTNLSNHPSSIQTTSAWLLQNHSNRELIIRVWLKTVKKETHGSKIVNLLYVANDVSQNARKTCPQFKDEFFPAIESSFRHAIELKNAKEVEHAIGKLINVWKDRQIFTPSQCKRLHEVHQQVKLSGSFPTPAVANKEHGKVAQPSQFVVEEAKKNAQDVLLSLKRLQNPPSTEREIRTELSKYPDNISCPEKLQSVRSSQEAQSLLVQNEEALPMLEEYVKRLKNETNERETLESNLNMLIENVRMSIEHHEKLCREVKRREDRIKADLLEVEKTFESLPDLAAEMPNAPLPTLEALFEKRKK.

The region spanning 1-135 (MADFTEQTLR…RLHEVHQQVK (135 aa)) is the CID domain. Residues 227-273 (MLEEYVKRLKNETNERETLESNLNMLIENVRMSIEHHEKLCREVKRR) adopt a coiled-coil conformation.

The chain is CID domain-containing protein 1 (cids-1) from Caenorhabditis elegans.